The primary structure comprises 111 residues: Large ribosomal subunit protein uL22 (111 aa).

The protein belongs to the universal ribosomal protein uL22 family. Part of the 50S ribosomal subunit.

Functionally, this protein binds specifically to 23S rRNA; its binding is stimulated by other ribosomal proteins, e.g. L4, L17, and L20. It is important during the early stages of 50S assembly. It makes multiple contacts with different domains of the 23S rRNA in the assembled 50S subunit and ribosome. In terms of biological role, the globular domain of the protein is located near the polypeptide exit tunnel on the outside of the subunit, while an extended beta-hairpin is found that lines the wall of the exit tunnel in the center of the 70S ribosome. This Geotalea uraniireducens (strain Rf4) (Geobacter uraniireducens) protein is Large ribosomal subunit protein uL22.